Here is a 279-residue protein sequence, read N- to C-terminus: Large ribosomal subunit protein uL2 (279 aa).

2 disordered regions span residues 1–28 (MPAR…TKEK) and 221–279 (RGTV…GRRR). Residues 12 to 22 (GRRNSSVLTRD) are compositionally biased toward polar residues.

It belongs to the universal ribosomal protein uL2 family. Part of the 50S ribosomal subunit. Forms a bridge to the 30S subunit in the 70S ribosome.

In terms of biological role, one of the primary rRNA binding proteins. Required for association of the 30S and 50S subunits to form the 70S ribosome, for tRNA binding and peptide bond formation. It has been suggested to have peptidyltransferase activity; this is somewhat controversial. Makes several contacts with the 16S rRNA in the 70S ribosome. The protein is Large ribosomal subunit protein uL2 of Rubrobacter xylanophilus (strain DSM 9941 / JCM 11954 / NBRC 16129 / PRD-1).